We begin with the raw amino-acid sequence, 323 residues long: Cuticle collagen 39 (323 aa).

The first 28 residues, 1–28 (MTGPTCLAVVAGISGVFVFGALFSVAQI), serve as a signal peptide directing secretion. Residues 80 to 89 (QCNCGPQASN) are compositionally biased toward polar residues. The disordered stretch occupies residues 80–293 (QCNCGPQASN…GAAEQGYRHR (214 aa)). Triple-helical region stretches follow at residues 93–125 (GPPG…AGPK), 138–200 (GSPG…GGQR), and 203–265 (GLPG…PGAD). The span at 108-117 (GQPGGAGNPG) shows a compositional bias: gly residues. Residues 136–146 (PAGSPGPAGAP) are compositionally biased toward low complexity. Residues 159–168 (GHPGQGGSQG) show a composition bias toward gly residues. A compositionally biased stretch (low complexity) spans 169-191 (PAGPRGPAGDAGAPGQVGAPGNP). Over residues 224–233 (GQSGGQGQQG) the composition is skewed to gly residues. Residues 234-267 (PAGPAGPDGQPGQPGQDGQAGAPGNDGAPGADAA) are compositionally biased toward low complexity.

This sequence belongs to the cuticular collagen family. As to quaternary structure, collagen polypeptide chains are complexed within the cuticle by disulfide bonds and other types of covalent cross-links.

Its function is as follows. Nematode cuticles are composed largely of collagen-like proteins. The cuticle functions both as an exoskeleton and as a barrier to protect the worm from its environment. The sequence is that of Cuticle collagen 39 (col-39) from Caenorhabditis elegans.